A 132-amino-acid polypeptide reads, in one-letter code: ATP synthase epsilon chain 1 (132 aa).

Belongs to the ATPase epsilon chain family. As to quaternary structure, F-type ATPases have 2 components, CF(1) - the catalytic core - and CF(0) - the membrane proton channel. CF(1) has five subunits: alpha(3), beta(3), gamma(1), delta(1), epsilon(1). CF(0) has three main subunits: a, b and c.

The protein localises to the cell inner membrane. In terms of biological role, produces ATP from ADP in the presence of a proton gradient across the membrane. This chain is ATP synthase epsilon chain 1, found in Cereibacter sphaeroides (strain ATCC 17023 / DSM 158 / JCM 6121 / CCUG 31486 / LMG 2827 / NBRC 12203 / NCIMB 8253 / ATH 2.4.1.) (Rhodobacter sphaeroides).